The primary structure comprises 435 residues: MSTGFFGDIQKVKYEGPDSDSPLAFRHYNPDEIVLGKRMEDHLRFAVAYWHSFAWEGGDPFGGRTFDRPWYSNELDAAKLKADVAFEFFSLLGAPYYCFHDADVRPEGRNFAENTRYLNEIVDIFEKKQAETGVKLLWGTANLFSNRRYMGGAATNPDPDVFAFAAATVKSCIDATKRLGGENYVLWGGREGYETLLNTDLGRELDQMGRFLNLVVEYKHKIGFKGTILIEPKPQEPTKHQYDYDVATVYGFLKRYGLESEVKVNIEQGHAILAGHSFEHELALARALGIFGSIDMNRNDYQSGWDTDQFPNNVPEMALAYYQVLLAGGFTTGGTNFDAKLRRQSLDPQDLLIGHIGGMDCCARGLKAAAAMLEDGALSKPLDERYAGWNGDFGKKLLTGLSLDQITAEVETKDINPQPKSGRQEYLENVVNRYV.

Catalysis depends on residues His-100 and Asp-103. Mg(2+) is bound by residues Glu-231, Glu-267, His-270, Asp-295, Asp-306, Asp-308, and Asp-338.

This sequence belongs to the xylose isomerase family. Homotetramer. The cofactor is Mg(2+).

It is found in the cytoplasm. The enzyme catalyses alpha-D-xylose = alpha-D-xylulofuranose. In Brucella anthropi (strain ATCC 49188 / DSM 6882 / CCUG 24695 / JCM 21032 / LMG 3331 / NBRC 15819 / NCTC 12168 / Alc 37) (Ochrobactrum anthropi), this protein is Xylose isomerase.